Consider the following 529-residue polypeptide: UDP-glucuronosyltransferase 2B23 (529 aa).

Positions 1–24 are cleaved as a signal peptide; sequence MSVKWTSVILLIQLSFYFSSGSCG. Residues asparagine 67 and asparagine 68 are each glycosylated (N-linked (GlcNAc...) asparagine). Residues 494–514 traverse the membrane as a helical segment; the sequence is IGFLLACVATVIFIIMKCCLF.

This sequence belongs to the UDP-glycosyltransferase family. As to expression, expressed in several tissues, including the prostate, mammary gland, epididymis, testis and ovary.

It is found in the microsome membrane. Its subcellular location is the endoplasmic reticulum membrane. It carries out the reaction glucuronate acceptor + UDP-alpha-D-glucuronate = acceptor beta-D-glucuronoside + UDP + H(+). In terms of biological role, UDPGTs are of major importance in the conjugation and subsequent elimination of potentially toxic xenobiotics and endogenous compounds. This isozyme has glucuronidating capacity on 6 steroids and the bile acid, hyodeoxycholic acid. May potentially play an important role in estrogen and androgen catabolism in peripheral steroid target tissues. This Macaca fascicularis (Crab-eating macaque) protein is UDP-glucuronosyltransferase 2B23 (UGT2B23).